The primary structure comprises 519 residues: T-box transcription factor TBX5 (519 aa).

Residues 1–46 are disordered; it reads MADTEEAYGMPDTPVEAEPKELQCEPKQDNQLGASSKTPTSPPAAF. Residues 17-28 are compositionally biased toward basic and acidic residues; it reads AEPKELQCEPKQ. The span at 29 to 39 shows a compositional bias: polar residues; that stretch reads DNQLGASSKTP. Residues 63–238 constitute a DNA-binding region (T-box); sequence LWLKFHEVGT…NNPFAKGFRG (176 aa). Disordered regions lie at residues 254–282, 293–312, and 326–372; these read EYPV…RNIT, CENG…SAYT, and KRKV…TSFR. A compositionally biased stretch (polar residues) spans 262–282; the sequence is TVRQKVSSNHSPFSQETRNIT. Residues 298 to 309 are compositionally biased toward low complexity; it reads SSTSQDLLPSSS. The segment covering 328–342 has biased composition (basic and acidic residues); the sequence is KVSEEPAEHSYKKPY.

In terms of assembly, monomer. Homodimer (via the T-box); binds DNA as homodimer.

Its subcellular location is the nucleus. It is found in the cytoplasm. DNA-binding protein that regulates the transcription of several genes and is involved in heart development and limb pattern formation. May bind to the core DNA motif of promoters. This Xenopus laevis (African clawed frog) protein is T-box transcription factor TBX5 (tbx5).